We begin with the raw amino-acid sequence, 144 residues long: Maximins z/Hv (144 aa).

An N-terminal signal peptide occupies residues 1–18; that stretch reads MNFKYIVAVSFLIASGYA. Positions 19 to 43 are excised as a propeptide; that stretch reads RSEENDVQSLSQREVLEEESLREIR. Position 70 is an asparagine amide (N70). A propeptide spanning residues 74-123 is cleaved from the precursor; the sequence is TAEDHEVMKRLKAVMRDLDSLDHPEEASERETRGFNQEEIANLFTKKEKR. I143 bears the Isoleucine amide mark.

Belongs to the bombinin family. Expressed by the skin glands.

It is found in the secreted. Its function is as follows. Maximin-z shows antimicrobial activity against bacteria and against the fungus C.albicans. It has little hemolytic activity. Functionally, maximin-Hv shows antimicrobial activity against bacteria and against the fungus C.albicans. Shows strong hemolytic activity. The polypeptide is Maximins z/Hv (Bombina maxima (Giant fire-bellied toad)).